We begin with the raw amino-acid sequence, 342 residues long: Dihydroorotate dehydrogenase (quinone) (342 aa).

Residues 60–64 (AGLDK) and T84 contribute to the FMN site. K64 contacts substrate. 109–113 (NRMGF) lines the substrate pocket. Residues N137 and N170 each contribute to the FMN site. N170 is a substrate binding site. S173 (nucleophile) is an active-site residue. A substrate-binding site is contributed by N175. The FMN site is built by K215 and T243. Residue 244–245 (NT) participates in substrate binding. FMN is bound by residues G266, G295, and 316-317 (YS).

The protein belongs to the dihydroorotate dehydrogenase family. Type 2 subfamily. In terms of assembly, monomer. FMN is required as a cofactor.

The protein resides in the cell membrane. The enzyme catalyses (S)-dihydroorotate + a quinone = orotate + a quinol. The protein operates within pyrimidine metabolism; UMP biosynthesis via de novo pathway; orotate from (S)-dihydroorotate (quinone route): step 1/1. Its function is as follows. Catalyzes the conversion of dihydroorotate to orotate with quinone as electron acceptor. The sequence is that of Dihydroorotate dehydrogenase (quinone) from Nitrosomonas eutropha (strain DSM 101675 / C91 / Nm57).